Here is a 604-residue protein sequence, read N- to C-terminus: Sulfite reductase [NADPH] flavoprotein alpha-component (604 aa).

The 139-residue stretch at 65 to 203 (VTILYGSQTG…AAGQWHADVL (139 aa)) folds into the Flavodoxin-like domain. FMN contacts are provided by residues 71 to 76 (SQTGNG), 118 to 121 (STHG), and 154 to 163 (LGDSSYEFFC). The region spanning 236–453 (QNPYSAEVLV…VEPNKHFRLP (218 aa)) is the FAD-binding FR-type domain. Residues Thr324, Leu358, 392-395 (RLYS), 410-412 (TVA), and 425-428 (GGAS) contribute to the FAD site. NADP(+)-binding positions include 524 to 525 (SR), 530 to 534 (KIYVQ), and Asp566. Tyr604 contacts FAD.

It belongs to the NADPH-dependent sulphite reductase flavoprotein subunit CysJ family. The protein in the N-terminal section; belongs to the flavodoxin family. This sequence in the C-terminal section; belongs to the flavoprotein pyridine nucleotide cytochrome reductase family. In terms of assembly, alpha(8)-beta(8). The alpha component is a flavoprotein, the beta component is a hemoprotein. Requires FAD as cofactor. The cofactor is FMN.

The enzyme catalyses hydrogen sulfide + 3 NADP(+) + 3 H2O = sulfite + 3 NADPH + 4 H(+). It participates in sulfur metabolism; hydrogen sulfide biosynthesis; hydrogen sulfide from sulfite (NADPH route): step 1/1. In terms of biological role, component of the sulfite reductase complex that catalyzes the 6-electron reduction of sulfite to sulfide. This is one of several activities required for the biosynthesis of L-cysteine from sulfate. The flavoprotein component catalyzes the electron flow from NADPH -&gt; FAD -&gt; FMN to the hemoprotein component. The sequence is that of Sulfite reductase [NADPH] flavoprotein alpha-component from Shewanella sp. (strain ANA-3).